The primary structure comprises 209 residues: V-type ATP synthase subunit D (209 aa).

This sequence belongs to the V-ATPase D subunit family.

Functionally, produces ATP from ADP in the presence of a proton gradient across the membrane. The polypeptide is V-type ATP synthase subunit D (Anaeromyxobacter dehalogenans (strain 2CP-C)).